An 84-amino-acid chain; its full sequence is UPF0457 protein BT9727_3043 (84 aa).

It belongs to the UPF0457 family.

This Bacillus thuringiensis subsp. konkukian (strain 97-27) protein is UPF0457 protein BT9727_3043.